Consider the following 159-residue polypeptide: Large ribosomal subunit protein mL50 (159 aa).

Belongs to the mitochondrion-specific ribosomal protein mL50 family. As to quaternary structure, component of the mitochondrial ribosome large subunit (39S) which comprises a 16S rRNA and about 50 distinct proteins.

The protein localises to the mitochondrion. The sequence is that of Large ribosomal subunit protein mL50 (Mrpl50) from Mus musculus (Mouse).